Consider the following 31-residue polypeptide: Alpha-conotoxin Li1.12 (31 aa).

A propeptide spanning residues 1–15 is cleaved from the precursor; sequence AGNAKMSALMALTIR. Intrachain disulfides connect cysteine 17–cysteine 23 and cysteine 18–cysteine 30. Residue cysteine 30 is modified to Cysteine amide.

Belongs to the conotoxin A superfamily. In terms of tissue distribution, expressed by the venom duct.

The protein localises to the secreted. Alpha-conotoxins act on postsynaptic membranes, they bind to the nicotinic acetylcholine receptors (nAChR) and thus inhibit them. This toxin inhibits alpha-3-beta-4, alpha-6/alpha-3-beta-4, and alpha-2-beta-4 nAChRs. In Conus lividus (Livid cone), this protein is Alpha-conotoxin Li1.12.